Reading from the N-terminus, the 61-residue chain is UPF0434 protein MS0934 (61 aa).

The protein belongs to the UPF0434 family.

The sequence is that of UPF0434 protein MS0934 from Mannheimia succiniciproducens (strain KCTC 0769BP / MBEL55E).